Consider the following 742-residue polypeptide: Phosphoribosylformylglycinamidine synthase subunit PurL (742 aa).

Histidine 54 is an active-site residue. Tyrosine 57 and lysine 96 together coordinate ATP. Glutamate 98 lines the Mg(2+) pocket. Substrate-binding positions include 99–102 and arginine 121; that span reads SHNH. Residue histidine 100 is the Proton acceptor of the active site. A Mg(2+)-binding site is contributed by aspartate 122. Residue glutamine 245 participates in substrate binding. Aspartate 273 lines the Mg(2+) pocket. A substrate-binding site is contributed by 317–319; sequence ESQ. Aspartate 500 and glycine 537 together coordinate ATP. Asparagine 538 provides a ligand contact to Mg(2+). Serine 540 contacts substrate.

This sequence belongs to the FGAMS family. Monomer. Part of the FGAM synthase complex composed of 1 PurL, 1 PurQ and 2 PurS subunits.

Its subcellular location is the cytoplasm. The enzyme catalyses N(2)-formyl-N(1)-(5-phospho-beta-D-ribosyl)glycinamide + L-glutamine + ATP + H2O = 2-formamido-N(1)-(5-O-phospho-beta-D-ribosyl)acetamidine + L-glutamate + ADP + phosphate + H(+). The protein operates within purine metabolism; IMP biosynthesis via de novo pathway; 5-amino-1-(5-phospho-D-ribosyl)imidazole from N(2)-formyl-N(1)-(5-phospho-D-ribosyl)glycinamide: step 1/2. Its function is as follows. Part of the phosphoribosylformylglycinamidine synthase complex involved in the purines biosynthetic pathway. Catalyzes the ATP-dependent conversion of formylglycinamide ribonucleotide (FGAR) and glutamine to yield formylglycinamidine ribonucleotide (FGAM) and glutamate. The FGAM synthase complex is composed of three subunits. PurQ produces an ammonia molecule by converting glutamine to glutamate. PurL transfers the ammonia molecule to FGAR to form FGAM in an ATP-dependent manner. PurS interacts with PurQ and PurL and is thought to assist in the transfer of the ammonia molecule from PurQ to PurL. The sequence is that of Phosphoribosylformylglycinamidine synthase subunit PurL from Geobacillus kaustophilus (strain HTA426).